A 180-amino-acid polypeptide reads, in one-letter code: Acireductone dioxygenase 1 (180 aa).

Residues His82, His84, Glu88, and His127 each coordinate Fe(2+). His82, His84, Glu88, and His127 together coordinate Ni(2+).

It belongs to the acireductone dioxygenase (ARD) family. Fe(2+) serves as cofactor. It depends on Ni(2+) as a cofactor.

The protein resides in the cytoplasm. The protein localises to the nucleus. The enzyme catalyses 1,2-dihydroxy-5-(methylsulfanyl)pent-1-en-3-one + O2 = 4-methylsulfanyl-2-oxobutanoate + formate + 2 H(+). It catalyses the reaction 1,2-dihydroxy-5-(methylsulfanyl)pent-1-en-3-one + O2 = 3-(methylsulfanyl)propanoate + CO + formate + 2 H(+). Its pathway is amino-acid biosynthesis; L-methionine biosynthesis via salvage pathway; L-methionine from S-methyl-5-thio-alpha-D-ribose 1-phosphate: step 5/6. In terms of biological role, catalyzes 2 different reactions between oxygen and the acireductone 1,2-dihydroxy-3-keto-5-methylthiopentene (DHK-MTPene) depending upon the metal bound in the active site. Fe-containing acireductone dioxygenase (Fe-ARD) produces formate and 2-keto-4-methylthiobutyrate (KMTB), the alpha-ketoacid precursor of methionine in the methionine recycle pathway. Ni-containing acireductone dioxygenase (Ni-ARD) produces methylthiopropionate, carbon monoxide and formate, and does not lie on the methionine recycle pathway. The sequence is that of Acireductone dioxygenase 1 from Sorghum bicolor (Sorghum).